The primary structure comprises 279 residues: Putative pyruvate, phosphate dikinase regulatory protein (279 aa).

153-160 (GISRTSKT) serves as a coordination point for ADP.

Belongs to the pyruvate, phosphate/water dikinase regulatory protein family. PDRP subfamily.

The enzyme catalyses N(tele)-phospho-L-histidyl/L-threonyl-[pyruvate, phosphate dikinase] + ADP = N(tele)-phospho-L-histidyl/O-phospho-L-threonyl-[pyruvate, phosphate dikinase] + AMP + H(+). The catalysed reaction is N(tele)-phospho-L-histidyl/O-phospho-L-threonyl-[pyruvate, phosphate dikinase] + phosphate + H(+) = N(tele)-phospho-L-histidyl/L-threonyl-[pyruvate, phosphate dikinase] + diphosphate. Bifunctional serine/threonine kinase and phosphorylase involved in the regulation of the pyruvate, phosphate dikinase (PPDK) by catalyzing its phosphorylation/dephosphorylation. The polypeptide is Putative pyruvate, phosphate dikinase regulatory protein (Brucella melitensis biotype 2 (strain ATCC 23457)).